A 206-amino-acid chain; its full sequence is Small ribosomal subunit protein uS4 (206 aa).

An S4 RNA-binding domain is found at 96–156; sequence GRLDNVVYRM…EKAKKQSRVK (61 aa).

Belongs to the universal ribosomal protein uS4 family. Part of the 30S ribosomal subunit. Contacts protein S5. The interaction surface between S4 and S5 is involved in control of translational fidelity.

Its function is as follows. One of the primary rRNA binding proteins, it binds directly to 16S rRNA where it nucleates assembly of the body of the 30S subunit. In terms of biological role, with S5 and S12 plays an important role in translational accuracy. The chain is Small ribosomal subunit protein uS4 from Erwinia tasmaniensis (strain DSM 17950 / CFBP 7177 / CIP 109463 / NCPPB 4357 / Et1/99).